Here is a 140-residue protein sequence, read N- to C-terminus: Ribosome-binding factor A (140 aa).

This sequence belongs to the RbfA family. Monomer. Binds 30S ribosomal subunits, but not 50S ribosomal subunits or 70S ribosomes.

Its subcellular location is the cytoplasm. One of several proteins that assist in the late maturation steps of the functional core of the 30S ribosomal subunit. Associates with free 30S ribosomal subunits (but not with 30S subunits that are part of 70S ribosomes or polysomes). Required for efficient processing of 16S rRNA. May interact with the 5'-terminal helix region of 16S rRNA. This Cereibacter sphaeroides (strain ATCC 17023 / DSM 158 / JCM 6121 / CCUG 31486 / LMG 2827 / NBRC 12203 / NCIMB 8253 / ATH 2.4.1.) (Rhodobacter sphaeroides) protein is Ribosome-binding factor A.